The primary structure comprises 255 residues: Hydroxyethylthiazole kinase (255 aa).

Met38 contributes to the substrate binding site. Arg114 and Thr160 together coordinate ATP. Gly187 contacts substrate.

It belongs to the Thz kinase family. The cofactor is Mg(2+).

The catalysed reaction is 5-(2-hydroxyethyl)-4-methylthiazole + ATP = 4-methyl-5-(2-phosphooxyethyl)-thiazole + ADP + H(+). Its pathway is cofactor biosynthesis; thiamine diphosphate biosynthesis; 4-methyl-5-(2-phosphoethyl)-thiazole from 5-(2-hydroxyethyl)-4-methylthiazole: step 1/1. Catalyzes the phosphorylation of the hydroxyl group of 4-methyl-5-beta-hydroxyethylthiazole (THZ). The polypeptide is Hydroxyethylthiazole kinase (Lysinibacillus sphaericus (strain C3-41)).